A 156-amino-acid chain; its full sequence is Ribonuclease H (156 aa).

Positions Q7–I148 constitute an RNase H type-1 domain. D16, E54, D76, and D140 together coordinate Mg(2+).

The protein belongs to the RNase H family. As to quaternary structure, monomer. Mg(2+) serves as cofactor.

Its subcellular location is the cytoplasm. It catalyses the reaction Endonucleolytic cleavage to 5'-phosphomonoester.. In terms of biological role, endonuclease that specifically degrades the RNA of RNA-DNA hybrids. This Zymomonas mobilis subsp. mobilis (strain ATCC 31821 / ZM4 / CP4) protein is Ribonuclease H (rnhA).